We begin with the raw amino-acid sequence, 348 residues long: Uroporphyrinogen decarboxylase (348 aa).

Substrate is bound by residues 27 to 31 (RQAGR), F46, D76, Y152, S207, and H320.

This sequence belongs to the uroporphyrinogen decarboxylase family. In terms of assembly, homodimer.

The protein localises to the cytoplasm. It carries out the reaction uroporphyrinogen III + 4 H(+) = coproporphyrinogen III + 4 CO2. It functions in the pathway porphyrin-containing compound metabolism; protoporphyrin-IX biosynthesis; coproporphyrinogen-III from 5-aminolevulinate: step 4/4. Catalyzes the decarboxylation of four acetate groups of uroporphyrinogen-III to yield coproporphyrinogen-III. This Bacillus cereus (strain AH820) protein is Uroporphyrinogen decarboxylase.